Reading from the N-terminus, the 97-residue chain is Large ribosomal subunit protein bL28 (97 aa).

The protein belongs to the bacterial ribosomal protein bL28 family.

The protein is Large ribosomal subunit protein bL28 of Rickettsia bellii (strain OSU 85-389).